The primary structure comprises 312 residues: Olfactory receptor 2T8 (312 aa).

The Extracellular segment spans residues 1 to 26 (MENGSYTSYFILLGLFNHTRAHQVLF). N-linked (GlcNAc...) asparagine glycans are attached at residues Asn3 and Asn17. The chain crosses the membrane as a helical span at residues 27–47 (MMVLSIVLTSLFGNSLMILLI). At 48 to 55 (HWDHRLHT) the chain is on the cytoplasmic side. The helical transmembrane segment at 56–76 (PMYFLLSQLSLMDVMLVSTTV) threads the bilayer. Residues 77-96 (PKMAADYLTGSKAISRAGCG) are Extracellular-facing. The cysteines at positions 95 and 177 are disulfide-linked. A helical transmembrane segment spans residues 97-117 (AQIFFLPTLGGGECFLLAAMA). Over 118 to 143 (YDRYAAVCHPLRYPTLMSWQLCLRMN) the chain is Cytoplasmic. The chain crosses the membrane as a helical span at residues 144-164 (LSCWLLGAADGLLQAVATLSF). Over 165–201 (PYCGAHEIDHFFCETPVLVRLACADTSVFENAMYICC) the chain is Extracellular. The chain crosses the membrane as a helical span at residues 202–222 (VLMLLVPFSLILSSYGLILAA). The Cytoplasmic portion of the chain corresponds to 223 to 234 (VLHMRSTEARKK). Residues 235 to 255 (AFATCSSHVAVVGLFYGAAIF) traverse the membrane as a helical segment. At 256 to 269 (TYMRPKSHRSTNHD) the chain is on the extracellular side. A helical transmembrane segment spans residues 270 to 290 (KVVSAFYTMFTPLLNPLIYSV). Topologically, residues 291-312 (KNSEVKGALTRCMGRCVALSRE) are cytoplasmic.

The protein belongs to the G-protein coupled receptor 1 family.

It is found in the cell membrane. In terms of biological role, odorant receptor. In Homo sapiens (Human), this protein is Olfactory receptor 2T8 (OR2T8).